The primary structure comprises 344 residues: Methylthioribose-1-phosphate isomerase (344 aa).

Substrate contacts are provided by residues 55 to 57 (RGA), Arg-98, and Gln-202. Asp-243 functions as the Proton donor in the catalytic mechanism. Position 253–254 (253–254 (NK)) interacts with substrate.

Belongs to the eIF-2B alpha/beta/delta subunits family. MtnA subfamily.

It carries out the reaction 5-(methylsulfanyl)-alpha-D-ribose 1-phosphate = 5-(methylsulfanyl)-D-ribulose 1-phosphate. The protein operates within amino-acid biosynthesis; L-methionine biosynthesis via salvage pathway; L-methionine from S-methyl-5-thio-alpha-D-ribose 1-phosphate: step 1/6. Catalyzes the interconversion of methylthioribose-1-phosphate (MTR-1-P) into methylthioribulose-1-phosphate (MTRu-1-P). In Gemmatimonas aurantiaca (strain DSM 14586 / JCM 11422 / NBRC 100505 / T-27), this protein is Methylthioribose-1-phosphate isomerase.